The primary structure comprises 156 residues: Small ribosomal subunit protein uS7 (156 aa).

Belongs to the universal ribosomal protein uS7 family. Part of the 30S ribosomal subunit. Contacts proteins S9 and S11.

In terms of biological role, one of the primary rRNA binding proteins, it binds directly to 16S rRNA where it nucleates assembly of the head domain of the 30S subunit. Is located at the subunit interface close to the decoding center, probably blocks exit of the E-site tRNA. In Hamiltonella defensa subsp. Acyrthosiphon pisum (strain 5AT), this protein is Small ribosomal subunit protein uS7.